Here is a 900-residue protein sequence, read N- to C-terminus: Translation initiation factor IF-2 (900 aa).

The segment covering 80–95 (LEEQSRKTVEKEDQLR) has biased composition (basic and acidic residues). Disordered stretches follow at residues 80-106 (LEEQ…VPGR), 149-169 (AVEA…DSPV), and 221-268 (DEFD…VDEK). A compositionally biased stretch (basic residues) spans 253-262 (GKKKGKKKKK). The 171-residue stretch at 397–567 (TRPPVVTIMG…LTEAEVRELK (171 aa)) folds into the tr-type G domain. The tract at residues 406 to 413 (GHVDHGKT) is G1. Residue 406-413 (GHVDHGKT) participates in GTP binding. A G2 region spans residues 431 to 435 (GITQH). A G3 region spans residues 453–456 (DTPG). GTP-binding positions include 453–457 (DTPGH) and 507–510 (NKID). Residues 507-510 (NKID) are G4. The G5 stretch occupies residues 543 to 545 (SAK).

Belongs to the TRAFAC class translation factor GTPase superfamily. Classic translation factor GTPase family. IF-2 subfamily.

The protein resides in the cytoplasm. Functionally, one of the essential components for the initiation of protein synthesis. Protects formylmethionyl-tRNA from spontaneous hydrolysis and promotes its binding to the 30S ribosomal subunits. Also involved in the hydrolysis of GTP during the formation of the 70S ribosomal complex. The polypeptide is Translation initiation factor IF-2 (Chlorobium phaeovibrioides (strain DSM 265 / 1930) (Prosthecochloris vibrioformis (strain DSM 265))).